A 204-amino-acid chain; its full sequence is Putative AgrB-like protein (204 aa).

The next 4 helical transmembrane spans lie at 40 to 60 (IILI…ATGL), 87 to 107 (LNCT…FQNI), 111 to 131 (NWIV…FAPA), and 156 to 176 (LILT…LIMV).

Belongs to the AgrB family.

It localises to the cell membrane. Its function is as follows. May be involved in the proteolytic processing of a quorum sensing system signal molecule precursor. This chain is Putative AgrB-like protein, found in Listeria welshimeri serovar 6b (strain ATCC 35897 / DSM 20650 / CCUG 15529 / CIP 8149 / NCTC 11857 / SLCC 5334 / V8).